A 154-amino-acid polypeptide reads, in one-letter code: MMRLSFNEEEVERAMNLYRVFARAFKSVSEHSIRDSKEHGFNPTEFAVLELLYTRGPQKLQQIGSRLLLVSGNVTYVIDKLERNGFLVREQDPKDKRSVYAHLTDKGNEYLDKIYPIHALRIARAFSGLSPDEQDQLIVLLKKAGIHSQHLLFR.

The region spanning 14–146 (AMNLYRVFAR…LIVLLKKAGI (133 aa)) is the HTH marR-type domain. Residues 60-83 (LQQIGSRLLLVSGNVTYVIDKLER) constitute a DNA-binding region (H-T-H motif).

This is an uncharacterized protein from Bacillus subtilis (strain 168).